Reading from the N-terminus, the 748-residue chain is Polyribonucleotide nucleotidyltransferase (748 aa).

Mg(2+) contacts are provided by aspartate 484 and aspartate 490. One can recognise a KH domain in the interval 551–610 (PRIETMSVPKDKIRDVIGTGGKVIREIVATTGAKVDIEDDGTVRLSSSDPANIEAAREWI). Residues 620–688 (GKIYNGKVVN…NRGKVRLSMR (69 aa)) enclose the S1 motif domain. Residues 693-748 (ETGAELDDNRPPRENAERRGGERPRRDRGPRRESGDRPARRDMEPEFAPAFLRKDS) are disordered. The segment covering 699–736 (DDNRPPRENAERRGGERPRRDRGPRRESGDRPARRDME) has biased composition (basic and acidic residues).

It belongs to the polyribonucleotide nucleotidyltransferase family. Mg(2+) is required as a cofactor.

Its subcellular location is the cytoplasm. The catalysed reaction is RNA(n+1) + phosphate = RNA(n) + a ribonucleoside 5'-diphosphate. Involved in mRNA degradation. Catalyzes the phosphorolysis of single-stranded polyribonucleotides processively in the 3'- to 5'-direction. In Zymomonas mobilis subsp. mobilis (strain ATCC 31821 / ZM4 / CP4), this protein is Polyribonucleotide nucleotidyltransferase.